Consider the following 775-residue polypeptide: DNA polymerase (775 aa).

Belongs to the DNA polymerase type-B family. In terms of assembly, monomer.

It carries out the reaction DNA(n) + a 2'-deoxyribonucleoside 5'-triphosphate = DNA(n+1) + diphosphate. Functionally, in addition to polymerase activity, this DNA polymerase exhibits 3' to 5' exonuclease activity. The polypeptide is DNA polymerase (pol) (Pyrococcus glycovorans).